We begin with the raw amino-acid sequence, 310 residues long: p-hydroxybenzoic acid efflux pump subunit AaeA (310 aa).

A helical membrane pass occupies residues 12 to 32; sequence AITLVLVILAFIAIFRAWVYY.

Belongs to the membrane fusion protein (MFP) (TC 8.A.1) family.

Its subcellular location is the cell inner membrane. Its function is as follows. Forms an efflux pump with AaeB. The protein is p-hydroxybenzoic acid efflux pump subunit AaeA of Citrobacter koseri (strain ATCC BAA-895 / CDC 4225-83 / SGSC4696).